The following is a 237-amino-acid chain: D-aminoacyl-tRNA deacylase (237 aa).

It belongs to the DtdA deacylase family. As to quaternary structure, monomer. Zn(2+) serves as cofactor.

The catalysed reaction is a D-aminoacyl-tRNA + H2O = a tRNA + a D-alpha-amino acid + H(+). It carries out the reaction glycyl-tRNA(Ala) + H2O = tRNA(Ala) + glycine + H(+). D-aminoacyl-tRNA deacylase with broad substrate specificity. By recycling D-aminoacyl-tRNA to D-amino acids and free tRNA molecules, this enzyme counteracts the toxicity associated with the formation of D-aminoacyl-tRNA entities in vivo. The sequence is that of D-aminoacyl-tRNA deacylase from Sulfurisphaera tokodaii (strain DSM 16993 / JCM 10545 / NBRC 100140 / 7) (Sulfolobus tokodaii).